We begin with the raw amino-acid sequence, 264 residues long: 3-methyl-2-oxobutanoate hydroxymethyltransferase (264 aa).

Residues D45 and D84 each contribute to the Mg(2+) site. 3-methyl-2-oxobutanoate contacts are provided by residues 45–46, D84, and K112; that span reads DS. Residue E114 coordinates Mg(2+). The active-site Proton acceptor is the E181.

Belongs to the PanB family. In terms of assembly, homodecamer; pentamer of dimers. Mg(2+) is required as a cofactor.

It is found in the cytoplasm. The enzyme catalyses 3-methyl-2-oxobutanoate + (6R)-5,10-methylene-5,6,7,8-tetrahydrofolate + H2O = 2-dehydropantoate + (6S)-5,6,7,8-tetrahydrofolate. The protein operates within cofactor biosynthesis; (R)-pantothenate biosynthesis; (R)-pantoate from 3-methyl-2-oxobutanoate: step 1/2. Its function is as follows. Catalyzes the reversible reaction in which hydroxymethyl group from 5,10-methylenetetrahydrofolate is transferred onto alpha-ketoisovalerate to form ketopantoate. The chain is 3-methyl-2-oxobutanoate hydroxymethyltransferase from Shigella boydii serotype 18 (strain CDC 3083-94 / BS512).